Here is an 834-residue protein sequence, read N- to C-terminus: Periplasmic nitrate reductase (834 aa).

Positions 1–31 form a signal peptide, tat-type signal; it reads MTGELTRREMLKAHAAGIAAATAGIALPAAA. One can recognise a 4Fe-4S Mo/W bis-MGD-type domain in the interval 43-99; it reads ITWSKAPCRFCGTGCGVMVGVKEGQVVATHGDMQAEVNRGLNCIKGYFLSKIMYGTD. [4Fe-4S] cluster-binding residues include C50, C53, C57, and C85. Residues K87, Q154, N179, C183, 216–223, 247–251, 266–268, M377, Q381, N487, 513–514, K536, D563, and 723–732 contribute to the Mo-bis(molybdopterin guanine dinucleotide) site; these read WGSNMAEM, STFTH, GTD, SD, and TGRVLEHWHS. Residue W799 coordinates substrate. Residues N807 and K824 each contribute to the Mo-bis(molybdopterin guanine dinucleotide) site.

This sequence belongs to the prokaryotic molybdopterin-containing oxidoreductase family. NasA/NapA/NarB subfamily. In terms of assembly, component of the periplasmic nitrate reductase NapAB complex composed of NapA and NapB. [4Fe-4S] cluster serves as cofactor. Requires Mo-bis(molybdopterin guanine dinucleotide) as cofactor. Predicted to be exported by the Tat system. The position of the signal peptide cleavage has not been experimentally proven.

The protein resides in the periplasm. The enzyme catalyses 2 Fe(II)-[cytochrome] + nitrate + 2 H(+) = 2 Fe(III)-[cytochrome] + nitrite + H2O. Its function is as follows. Catalytic subunit of the periplasmic nitrate reductase complex NapAB. Receives electrons from NapB and catalyzes the reduction of nitrate to nitrite. The protein is Periplasmic nitrate reductase of Rhizobium meliloti (strain 1021) (Ensifer meliloti).